Reading from the N-terminus, the 718-residue chain is Scarecrow-like protein 9 (718 aa).

The segment at 305–338 (VEKKKASDAQGGKRRARGRGRGRGRGGGGGQNGK) is disordered. Residues 316-328 (GKRRARGRGRGRG) are compositionally biased toward basic residues. One can recognise a GRAS domain in the interval 335–713 (QNGKKEVVDL…RTVMALSVWK (379 aa)). Positions 342-402 (VDLRSLLIHC…EARLAGTGSQ (61 aa)) are leucine repeat I (LRI). Residues 421–484 (HQLFLACCPF…YGSPKVRITG (64 aa)) are VHIID. A VHIID motif is present at residues 452–456 (VHVID). The tract at residues 500-532 (ETGQRLAAYAKLFGVPFEYKAIAKKWDAIQLED) is leucine repeat II (LRII). The tract at residues 541–635 (TVVNCLYRAE…MEVFGREALN (95 aa)) is PFYRE. The tract at residues 638 to 713 (ACEGWERVER…RTVMALSVWK (76 aa)) is SAW.

The protein belongs to the GRAS family. In terms of tissue distribution, expressed in cotyledons, leaves and flowers, and in the elongation zone in root.

It localises to the nucleus. Its function is as follows. Probable transcription factor involved in plant development. The sequence is that of Scarecrow-like protein 9 (SCL9) from Arabidopsis thaliana (Mouse-ear cress).